A 279-amino-acid polypeptide reads, in one-letter code: HTH-type transcriptional regulator HdfR (279 aa).

One can recognise an HTH lysR-type domain in the interval 1 to 58 (MDTELLKTFLEVSRTRHFGRAAESLYLTQSAVSFRIRQLENQLGVNLFTRHRNNIRLT). Residues 18–37 (FGRAAESLYLTQSAVSFRIR) constitute a DNA-binding region (H-T-H motif).

Belongs to the LysR transcriptional regulatory family.

Negatively regulates the transcription of the flagellar master operon flhDC by binding to the upstream region of the operon. The protein is HTH-type transcriptional regulator HdfR of Escherichia coli (strain ATCC 8739 / DSM 1576 / NBRC 3972 / NCIMB 8545 / WDCM 00012 / Crooks).